Reading from the N-terminus, the 41-residue chain is Alpha-conotoxin CIB (41 aa).

A propeptide spanning residues 1–21 (SDGRNEAANDEASDVIELALK) is cleaved from the precursor. Disulfide bonds link cysteine 23–cysteine 29 and cysteine 24–cysteine 37. The ser-Xaa-Pro motif, crucial for potent interaction with nAChR stretch occupies residues 25–27 (SNP). Cysteine 37 carries the post-translational modification Cysteine amide.

Belongs to the conotoxin A superfamily. Expressed by the venom duct.

Its subcellular location is the secreted. Its function is as follows. Alpha-conotoxins act on postsynaptic membranes, they bind to the nicotinic acetylcholine receptors (nAChR) and thus inhibit them. This toxin blocks rat neuronal nAChR alpha-3-beta-2/CHRNA3-CHRNB2 (IC(50)=128.9 nM) and alpha-7/CHRNA7 (IC(50)=1511 nM). In vivo, intramuscular injection into zebrafish does not produce any effect on the locomotion of zebrafish. The sequence is that of Alpha-conotoxin CIB from Conus catus (Cat cone).